The sequence spans 202 residues: ATP-dependent Clp protease proteolytic subunit (202 aa).

The active-site Nucleophile is the Ser-106. His-131 is an active-site residue.

The protein belongs to the peptidase S14 family. In terms of assembly, fourteen ClpP subunits assemble into 2 heptameric rings which stack back to back to give a disk-like structure with a central cavity, resembling the structure of eukaryotic proteasomes.

The protein resides in the cytoplasm. It carries out the reaction Hydrolysis of proteins to small peptides in the presence of ATP and magnesium. alpha-casein is the usual test substrate. In the absence of ATP, only oligopeptides shorter than five residues are hydrolyzed (such as succinyl-Leu-Tyr-|-NHMec, and Leu-Tyr-Leu-|-Tyr-Trp, in which cleavage of the -Tyr-|-Leu- and -Tyr-|-Trp bonds also occurs).. In terms of biological role, cleaves peptides in various proteins in a process that requires ATP hydrolysis. Has a chymotrypsin-like activity. Plays a major role in the degradation of misfolded proteins. In Variovorax paradoxus (strain S110), this protein is ATP-dependent Clp protease proteolytic subunit.